The chain runs to 293 residues: Ethanolamine ammonia-lyase small subunit (293 aa).

The adenosylcob(III)alamin site is built by V207 and E228.

The protein belongs to the EutC family. As to quaternary structure, the basic unit is a heterodimer which dimerizes to form tetramers. The heterotetramers trimerize; 6 large subunits form a core ring with 6 small subunits projecting outwards. The cofactor is adenosylcob(III)alamin.

Its subcellular location is the bacterial microcompartment. It catalyses the reaction ethanolamine = acetaldehyde + NH4(+). It participates in amine and polyamine degradation; ethanolamine degradation. In terms of biological role, catalyzes the deamination of various vicinal amino-alcohols to oxo compounds. Allows this organism to utilize ethanolamine as the sole source of nitrogen and carbon in the presence of external vitamin B12. This chain is Ethanolamine ammonia-lyase small subunit, found in Listeria monocytogenes serotype 4a (strain HCC23).